The following is a 324-amino-acid chain: Biotin synthase (324 aa).

Positions 43–273 (FCGNYFNFCS…HVFLRLAGGR (231 aa)) constitute a Radical SAM core domain. Positions 61, 65, and 68 each coordinate [4Fe-4S] cluster. [2Fe-2S] cluster is bound by residues Ser-105, Cys-138, Cys-198, and Arg-268.

Belongs to the radical SAM superfamily. Biotin synthase family. In terms of assembly, homodimer. It depends on [4Fe-4S] cluster as a cofactor. [2Fe-2S] cluster serves as cofactor.

It catalyses the reaction (4R,5S)-dethiobiotin + (sulfur carrier)-SH + 2 reduced [2Fe-2S]-[ferredoxin] + 2 S-adenosyl-L-methionine = (sulfur carrier)-H + biotin + 2 5'-deoxyadenosine + 2 L-methionine + 2 oxidized [2Fe-2S]-[ferredoxin]. Its pathway is cofactor biosynthesis; biotin biosynthesis; biotin from 7,8-diaminononanoate: step 2/2. Catalyzes the conversion of dethiobiotin (DTB) to biotin by the insertion of a sulfur atom into dethiobiotin via a radical-based mechanism. The polypeptide is Biotin synthase (Campylobacter hominis (strain ATCC BAA-381 / DSM 21671 / CCUG 45161 / LMG 19568 / NCTC 13146 / CH001A)).